We begin with the raw amino-acid sequence, 426 residues long: Phosphomethylpyrimidine synthase (426 aa).

Substrate contacts are provided by residues asparagine 65, methionine 94, tyrosine 123, histidine 162, 184–186 (SRG), 225–228 (DGMR), and glutamate 264. Histidine 268 contacts Zn(2+). A substrate-binding site is contributed by tyrosine 291. Histidine 332 serves as a coordination point for Zn(2+). 3 residues coordinate [4Fe-4S] cluster: cysteine 408, cysteine 411, and cysteine 415.

This sequence belongs to the ThiC family. [4Fe-4S] cluster is required as a cofactor.

The enzyme catalyses 5-amino-1-(5-phospho-beta-D-ribosyl)imidazole + S-adenosyl-L-methionine = 4-amino-2-methyl-5-(phosphooxymethyl)pyrimidine + CO + 5'-deoxyadenosine + formate + L-methionine + 3 H(+). The protein operates within cofactor biosynthesis; thiamine diphosphate biosynthesis. Functionally, catalyzes the synthesis of the hydroxymethylpyrimidine phosphate (HMP-P) moiety of thiamine from aminoimidazole ribotide (AIR) in a radical S-adenosyl-L-methionine (SAM)-dependent reaction. The chain is Phosphomethylpyrimidine synthase from Methanococcus vannielii (strain ATCC 35089 / DSM 1224 / JCM 13029 / OCM 148 / SB).